The following is a 355-amino-acid chain: Transcription factor TCP13 (355 aa).

Positions Met1 to Trp57 are disordered. Residues Gly74–Leu132 form the TCP domain. The interval Thr329–Met355 is disordered. Positions Leu341–Met355 are enriched in basic and acidic residues.

In terms of assembly, interacts with AHL27 and AHL29. Interacts with SPL. Interacts with KIN10; KIN11 and FLZ3. Expressed in cotyledons, particularly in the vascular region, in leaves, buds, flowers and immature siliques, and, to a lower extent, in roots.

The protein resides in the nucleus. It localises to the plastid. Its subcellular location is the chloroplast. Plays a pivotal role in the control of morphogenesis of shoot organs by negatively regulating the expression of boundary-specific genes such as CUC genes, probably through the induction of miRNA (e.g. miR164). Binds to the 3'-ACC-5' repeats in the light-responsive promoter (LRP) of psbD, and activates its transcription. Participates in ovule development. The protein is Transcription factor TCP13 (TCP13) of Arabidopsis thaliana (Mouse-ear cress).